The chain runs to 62 residues: Overexpressed in colon carcinoma 1 protein homolog (62 aa).

Over residues 1–16 (MGCGNSTAGGAGGRGA) the composition is skewed to gly residues. The interval 1-62 (MGCGNSTAGG…SGQTKAAPKD (62 aa)) is disordered.

The protein belongs to the OCC1 family.

This chain is Overexpressed in colon carcinoma 1 protein homolog, found in Gallus gallus (Chicken).